We begin with the raw amino-acid sequence, 140 residues long: Hemoglobin subunit alpha-D (140 aa).

Residues 1–140 (MLTDSDKKLV…VCTVLAEKYR (140 aa)) form the Globin domain. Residues His-57 and His-86 each coordinate heme b.

This sequence belongs to the globin family. In terms of assembly, heterotetramer of two alpha-D chains and two beta chains. In terms of tissue distribution, red blood cells.

In terms of biological role, involved in oxygen transport from the lung to the various peripheral tissues. In Columba livia (Rock dove), this protein is Hemoglobin subunit alpha-D (HBAD).